A 78-amino-acid chain; its full sequence is Defensin beta 136 (78 aa).

An N-terminal signal peptide occupies residues 1–21 (MNLCLSSLLFFLVILLPSGKG). Cystine bridges form between C33–C60, C40–C54, and C44–C61.

Belongs to the beta-defensin family.

It is found in the secreted. Functionally, host defense peptide that exhibits antimicrobial and antifungal activity. Exhibits antimicrobial activity against E.coli, S.aureus and C.albicans (in vitro). Has high lipopolysaccharide (LPS)-binding affinity, and may thereby be involved in immunoregulation through LPS neutralization. This Pan troglodytes (Chimpanzee) protein is Defensin beta 136 (DEFB136).